Reading from the N-terminus, the 941-residue chain is UvrABC system protein A (941 aa).

An ATP-binding site is contributed by 37–44; sequence GLSGSGKS. The C4-type zinc-finger motif lies at 260 to 287; the sequence is CFKCKMSFEELEPLSFSFNSPKGACESC. 2 consecutive ABC transporter domains span residues 316-585 and 605-937; these read IFGY…NNHS and KEKH…KFLA. ATP is bound at residue 637-644; that stretch reads GVSGSGKS. The C4-type zinc finger occupies 737–763; it reads CEKCQGDGDIKIEMHFLPDVLVQCDSC.

The protein belongs to the ABC transporter superfamily. UvrA family. As to quaternary structure, forms a heterotetramer with UvrB during the search for lesions.

It is found in the cytoplasm. Its function is as follows. The UvrABC repair system catalyzes the recognition and processing of DNA lesions. UvrA is an ATPase and a DNA-binding protein. A damage recognition complex composed of 2 UvrA and 2 UvrB subunits scans DNA for abnormalities. When the presence of a lesion has been verified by UvrB, the UvrA molecules dissociate. This chain is UvrABC system protein A, found in Helicobacter pylori (strain J99 / ATCC 700824) (Campylobacter pylori J99).